Reading from the N-terminus, the 727-residue chain is Protein edg-1 (727 aa).

The interval 703-727 (FAESSVKPTTSSAYGNSSNFSRYAD) is disordered.

In terms of assembly, may interact with deps-1 and prg-1.

The protein resides in the cytoplasmic granule. Plays a role in regulating deps-1 cluster formation in the germline. The polypeptide is Protein edg-1 (Caenorhabditis elegans).